The primary structure comprises 426 residues: Serine--tRNA ligase (426 aa).

231–233 is a binding site for L-serine; it reads TAE. 262 to 264 is a binding site for ATP; that stretch reads RSE. Glutamate 285 is an L-serine binding site. 349-352 is an ATP binding site; sequence EISS. Residue serine 385 participates in L-serine binding.

Belongs to the class-II aminoacyl-tRNA synthetase family. Type-1 seryl-tRNA synthetase subfamily. In terms of assembly, homodimer. The tRNA molecule binds across the dimer.

It localises to the cytoplasm. It carries out the reaction tRNA(Ser) + L-serine + ATP = L-seryl-tRNA(Ser) + AMP + diphosphate + H(+). The enzyme catalyses tRNA(Sec) + L-serine + ATP = L-seryl-tRNA(Sec) + AMP + diphosphate + H(+). Its pathway is aminoacyl-tRNA biosynthesis; selenocysteinyl-tRNA(Sec) biosynthesis; L-seryl-tRNA(Sec) from L-serine and tRNA(Sec): step 1/1. Its function is as follows. Catalyzes the attachment of serine to tRNA(Ser). Is also able to aminoacylate tRNA(Sec) with serine, to form the misacylated tRNA L-seryl-tRNA(Sec), which will be further converted into selenocysteinyl-tRNA(Sec). The chain is Serine--tRNA ligase from Brevibacillus brevis (strain 47 / JCM 6285 / NBRC 100599).